The primary structure comprises 651 residues: Probable inactive purple acid phosphatase 9 (651 aa).

The signal sequence occupies residues Met1–Ser20. Asn32, Asn96, and Asn202 each carry an N-linked (GlcNAc...) asparagine glycan. Asp305 and Tyr308 together coordinate Fe cation. A Zn(2+)-binding site is contributed by Asp305. Asn338 serves as a coordination point for Zn(2+). Asn338 lines the substrate pocket. N-linked (GlcNAc...) asparagine glycans are attached at residues Asn378 and Asn432. His444 contacts Zn(2+). Residue Asn475 is glycosylated (N-linked (GlcNAc...) asparagine). His483 lines the Zn(2+) pocket. His483–His485 is a binding site for substrate. Fe cation is bound at residue His485. 2 N-linked (GlcNAc...) asparagine glycosylation sites follow: Asn495 and Asn640.

It belongs to the metallophosphoesterase superfamily. Purple acid phosphatase family. In terms of assembly, homodimer. Requires Fe cation as cofactor. Zn(2+) is required as a cofactor. Expressed in roots, stems, leaves, flowers and siliques.

The protein resides in the secreted. The protein is Probable inactive purple acid phosphatase 9 (PAP9) of Arabidopsis thaliana (Mouse-ear cress).